Here is a 57-residue protein sequence, read N- to C-terminus: DNA-directed RNA polymerase subunit Rpo6 (57 aa).

This sequence belongs to the archaeal Rpo6/eukaryotic RPB6 RNA polymerase subunit family. As to quaternary structure, part of the RNA polymerase complex.

It is found in the cytoplasm. The enzyme catalyses RNA(n) + a ribonucleoside 5'-triphosphate = RNA(n+1) + diphosphate. Its function is as follows. DNA-dependent RNA polymerase (RNAP) catalyzes the transcription of DNA into RNA using the four ribonucleoside triphosphates as substrates. The chain is DNA-directed RNA polymerase subunit Rpo6 from Haloarcula marismortui (strain ATCC 43049 / DSM 3752 / JCM 8966 / VKM B-1809) (Halobacterium marismortui).